The primary structure comprises 106 residues: Putative membrane protein insertion efficiency factor (106 aa).

This sequence belongs to the UPF0161 family.

The protein resides in the cell inner membrane. Its function is as follows. Could be involved in insertion of integral membrane proteins into the membrane. This Acinetobacter baumannii (strain SDF) protein is Putative membrane protein insertion efficiency factor.